A 213-amino-acid polypeptide reads, in one-letter code: Motile sperm domain-containing protein 1 (213 aa).

One can recognise an MSP domain in the interval 16–143 (PVFVFPTELI…KEHLTESLFF (128 aa)). Helical transmembrane passes span 159 to 179 (SLLTVFLGVVCIAALMLPTLG) and 191 to 211 (LSVNQKLVAAYILGLITMAIL). Residues 205–208 (LITM) carry the Nuclear export signal motif.

It is found in the endoplasmic reticulum membrane. The protein localises to the golgi apparatus membrane. Plays a role in differentiation and/or proliferation of mesenchymal stem cells. Proposed to be involved in epithelial-to-mesenchymal transition (EMT). However, another study suggests that it is not required for EMT or stem cell self-renewal and acts during later stages of differentiation. This chain is Motile sperm domain-containing protein 1 (MOSPD1), found in Homo sapiens (Human).